We begin with the raw amino-acid sequence, 278 residues long: Tryptophan synthase alpha chain (278 aa).

Residues Glu50 and Asp61 each act as proton acceptor in the active site.

It belongs to the TrpA family. Tetramer of two alpha and two beta chains.

It carries out the reaction (1S,2R)-1-C-(indol-3-yl)glycerol 3-phosphate + L-serine = D-glyceraldehyde 3-phosphate + L-tryptophan + H2O. It participates in amino-acid biosynthesis; L-tryptophan biosynthesis; L-tryptophan from chorismate: step 5/5. The alpha subunit is responsible for the aldol cleavage of indoleglycerol phosphate to indole and glyceraldehyde 3-phosphate. In Rhodopseudomonas palustris (strain BisA53), this protein is Tryptophan synthase alpha chain.